The following is a 315-amino-acid chain: Transaldolase (315 aa).

Lys-125 serves as the catalytic Schiff-base intermediate with substrate.

It belongs to the transaldolase family. Type 1 subfamily. In terms of assembly, homodimer.

It is found in the cytoplasm. It carries out the reaction D-sedoheptulose 7-phosphate + D-glyceraldehyde 3-phosphate = D-erythrose 4-phosphate + beta-D-fructose 6-phosphate. It participates in carbohydrate degradation; pentose phosphate pathway; D-glyceraldehyde 3-phosphate and beta-D-fructose 6-phosphate from D-ribose 5-phosphate and D-xylulose 5-phosphate (non-oxidative stage): step 2/3. In terms of biological role, transaldolase is important for the balance of metabolites in the pentose-phosphate pathway. In Leptothrix cholodnii (strain ATCC 51168 / LMG 8142 / SP-6) (Leptothrix discophora (strain SP-6)), this protein is Transaldolase.